Consider the following 214-residue polypeptide: Vascular endothelial growth factor A (214 aa).

An N-terminal signal peptide occupies residues 1-26; it reads MNFLLSWVHWSLALLLYLHHAKWSQA. 3 cysteine pairs are disulfide-bonded: cysteine 51–cysteine 93, cysteine 82–cysteine 127, and cysteine 86–cysteine 129. N-linked (GlcNAc...) asparagine glycosylation occurs at asparagine 100. The segment covering 131–142 has biased composition (basic and acidic residues); the sequence is PKKDRARQEKKS. The segment at 131–162 is disordered; it reads PKKDRARQEKKSIRGKGKGQKRKRKKSRYKPW. Over residues 143-159 the composition is skewed to basic residues; sequence IRGKGKGQKRKRKKSRY.

The protein belongs to the PDGF/VEGF growth factor family. As to quaternary structure, homodimer; disulfide-linked. Also found as heterodimer with PGF. Interacts with NRP1. Interacts with BSG. Interacts with CD82; this interaction inhibits VEGFA-mediated signaling pathway.

The protein localises to the secreted. Functionally, growth factor active in angiogenesis, vasculogenesis and endothelial cell growth. Induces endothelial cell proliferation, promotes cell migration, inhibits apoptosis and induces permeabilization of blood vessels. Binds to the FLT1/VEGFR1 and KDR/VEGFR2 receptors, heparan sulfate and heparin. Binding to NRP1 receptor initiates a signaling pathway needed for motor neuron axon guidance and cell body migration, including for the caudal migration of facial motor neurons from rhombomere 4 to rhombomere 6 during embryonic development. Also binds the DEAR/FBXW7-AS1 receptor. This is Vascular endothelial growth factor A (VEGFA) from Canis lupus familiaris (Dog).